The primary structure comprises 336 residues: uncharacterized protein (336 aa).

The first 33 residues, 1 to 33 (MGSAWPAEIRKIAKISKRLLGATVILGFGVAEA), serve as a signal peptide directing secretion.

This is an uncharacterized protein from Sinorhizobium fredii (strain NBRC 101917 / NGR234).